A 329-amino-acid chain; its full sequence is Ficolin-2 (329 aa).

Residues 1 to 29 (MELGGAAGALGPSGPLLVCLCFGTLAAQA) form the signal peptide. The 60-residue stretch at 52-111 (GCPGLPGAPGLKGETGAAGLKGERGLPGVPGKAGPAGPKGSTGAQGEKGARGEKGESGQL) folds into the Collagen-like domain. The disordered stretch occupies residues 64-113 (GETGAAGLKGERGLPGVPGKAGPAGPKGSTGAQGEKGARGEKGESGQLHS). The segment covering 77 to 90 (LPGVPGKAGPAGPK) has biased composition (low complexity). The Fibrinogen C-terminal domain occupies 112 to 329 (HSCATGPRTC…KVSEMKLRLT (218 aa)). 2 disulfides stabilise this stretch: Cys-114–Cys-142 and Cys-121–Cys-149. Ca(2+) contacts are provided by Asp-265, Asp-267, Ser-269, and Ser-271. A disulfide bridge connects residues Cys-273 and Cys-286. N-linked (GlcNAc...) asparagine glycosylation occurs at Asn-316.

This sequence belongs to the ficolin lectin family. Homotrimer. Interacts with elastin. Interacts with MASP1 and MASP2.

Its subcellular location is the secreted. May function in innate immunity through activation of the lectin complement pathway. Calcium-dependent and GlcNAc-binding lectin. The polypeptide is Ficolin-2 (FCN2) (Bos taurus (Bovine)).